Here is a 160-residue protein sequence, read N- to C-terminus: MTIAVYPGSFDPVTNGHLDIAARASRIFDTVIMAVFDRPNKQLLFSTDERVALLRESTRHLPRVKVDTYSTLTVDYVRSVGASVIVRGMRAVGDFEAEFQLAQINQTLAPDIDIVLFMASHRYTFFSSSTVREIASLGGDVSWLVPGPVVDALKRVYGRR.

A substrate-binding site is contributed by S9. ATP contacts are provided by residues 9 to 10 (SF) and H17. Residues K41, T73, and R87 each coordinate substrate. Residues 88–90 (GMR), E98, and 123–129 (YTFFSSS) each bind ATP.

The protein belongs to the bacterial CoaD family. As to quaternary structure, homohexamer. Mg(2+) serves as cofactor.

The protein resides in the cytoplasm. The catalysed reaction is (R)-4'-phosphopantetheine + ATP + H(+) = 3'-dephospho-CoA + diphosphate. Its pathway is cofactor biosynthesis; coenzyme A biosynthesis; CoA from (R)-pantothenate: step 4/5. Reversibly transfers an adenylyl group from ATP to 4'-phosphopantetheine, yielding dephospho-CoA (dPCoA) and pyrophosphate. This is Phosphopantetheine adenylyltransferase from Roseiflexus castenholzii (strain DSM 13941 / HLO8).